The sequence spans 189 residues: 7-methyl-GTP pyrophosphatase (189 aa).

Asp-71 functions as the Proton acceptor in the catalytic mechanism.

This sequence belongs to the Maf family. YceF subfamily. A divalent metal cation serves as cofactor.

Its subcellular location is the cytoplasm. The enzyme catalyses N(7)-methyl-GTP + H2O = N(7)-methyl-GMP + diphosphate + H(+). Functionally, nucleoside triphosphate pyrophosphatase that hydrolyzes 7-methyl-GTP (m(7)GTP). May have a dual role in cell division arrest and in preventing the incorporation of modified nucleotides into cellular nucleic acids. This is 7-methyl-GTP pyrophosphatase from Bdellovibrio bacteriovorus (strain ATCC 15356 / DSM 50701 / NCIMB 9529 / HD100).